The sequence spans 320 residues: L-lactate dehydrogenase 2 (320 aa).

4 residues coordinate NAD(+): valine 16, aspartate 37, lysine 42, and tyrosine 69. Arginine 94 contributes to the substrate binding site. NAD(+) contacts are provided by residues serine 107, 124–126, and threonine 149; that span reads VTN. 126–129 lines the substrate pocket; that stretch reads NPVD. Substrate is bound at residue 154–157; sequence DTAR. Beta-D-fructose 1,6-bisphosphate contacts are provided by arginine 159 and histidine 174. Histidine 181 serves as the catalytic Proton acceptor. Threonine 235 provides a ligand contact to substrate.

The protein belongs to the LDH/MDH superfamily. LDH family. In terms of assembly, homotetramer.

It localises to the cytoplasm. The catalysed reaction is (S)-lactate + NAD(+) = pyruvate + NADH + H(+). It participates in fermentation; pyruvate fermentation to lactate; (S)-lactate from pyruvate: step 1/1. Allosterically activated by fructose 1,6-bisphosphate (FBP). Functionally, catalyzes the conversion of lactate to pyruvate. The protein is L-lactate dehydrogenase 2 of Clostridium acetobutylicum (strain ATCC 824 / DSM 792 / JCM 1419 / IAM 19013 / LMG 5710 / NBRC 13948 / NRRL B-527 / VKM B-1787 / 2291 / W).